Consider the following 262-residue polypeptide: uncharacterized protein (262 aa).

6 consecutive transmembrane segments (helical) span residues 7 to 27 (LAVA…LAHM), 58 to 78 (DTLG…IVFG), 114 to 134 (FLAF…VLGG), 140 to 160 (GGFQ…IAFG), 179 to 199 (GALG…YYLF), and 216 to 236 (IITA…VLAG).

The protein localises to the cell membrane. This is an uncharacterized protein from Methanocaldococcus jannaschii (strain ATCC 43067 / DSM 2661 / JAL-1 / JCM 10045 / NBRC 100440) (Methanococcus jannaschii).